The chain runs to 450 residues: Keratin, type I cytoskeletal 25 (450 aa).

Residues Met-1–Ser-24 form a disordered region. Residues Met-1 to Asn-78 form a head region. The coil 1A stretch occupies residues Glu-79–Trp-114. The IF rod domain occupies Glu-79–Cys-394. A linker 1 region spans residues Tyr-115 to Ile-136. Residues Ile-137 to Leu-228 are coil 1B. Positions Gln-229–Leu-251 are linker 12. The coil 2 stretch occupies residues Leu-252–Asp-390. Positions Asp-391–Asn-450 are tail. A Phosphoserine modification is found at Ser-442.

This sequence belongs to the intermediate filament family. In terms of assembly, heterodimer of a type I and a type II keratin. Heterodimer with type II keratin KRT5 leading to the formation of keratin intermediate filament (KIF) network. Interacts with KRT6A to form filaments.

The protein resides in the cytoplasm. Its function is as follows. Essential for the proper assembly of type I and type II keratin protein complexes and formation of keratin intermediate filaments in the inner root sheath (irs). Plays a role in the cytoskeleton organization. The protein is Keratin, type I cytoskeletal 25 of Capra hircus (Goat).